The primary structure comprises 515 residues: Organic cation/carnitine transporter 5 (515 aa).

Residues 1–43 are Cytoplasmic-facing; that stretch reads MADSLAPLLPTHIEEDEDTSSPLTFDKILEKSLSDFGFSQFLQ. Residues 44 to 64 form a helical membrane-spanning segment; sequence IVLVGLALTFDSQQIFITVFT. At 65–124 the chain is on the extracellular side; that stretch reads DAYPTWHCLDHTICNPATTDICKIPRSAWDWDGGFKGKSVISEFDLECSSSFLRSLPSST. A helical transmembrane segment spans residues 125-145; the sequence is FYVGSIVGGVVLAMIPDGSLG. Over 146–149 the chain is Cytoplasmic; it reads RKQL. A helical transmembrane segment spans residues 150–172; the sequence is LFFSSFAMSLTGISIFLSSNIWI. Residues 173-177 are Extracellular-facing; the sequence is YSFLK. The helical transmembrane segment at 178–195 threads the bilayer; it reads FVIGFARSQTGTYALVLI. Residue 195-202 participates in ATP binding; that stretch reads ISERISTK. Over 196-208 the chain is Cytoplasmic; that stretch reads SERISTKWRPRAT. The helical transmembrane segment at 209–229 threads the bilayer; it reads MVPFTLFVLGFMSLSGIAYLV. The Extracellular segment spans residues 230–235; sequence RHASWK. A helical membrane pass occupies residues 236–256; the sequence is VLYLCTSIPAGIHSIFIYFFA. At 257–320 the chain is on the cytoplasmic side; sequence LESPRWLHLE…LFIIKWAFRR (64 aa). Residues 321–341 traverse the membrane as a helical segment; it reads VTLVMIIMFGLGMSYYGVPLA. Over 342 to 350 the chain is Extracellular; that stretch reads VRDIKVNIY. Residues 351-371 traverse the membrane as a helical segment; the sequence is MSEALNAMVELPTFVVTPILL. The Cytoplasmic segment spans residues 372–379; the sequence is EQFSRRSS. Residues 380–400 traverse the membrane as a helical segment; the sequence is VLVNCLIGGASGVLCFVMSLY. Residues 401-411 are Extracellular-facing; that stretch reads GRTKIAFALEL. A helical membrane pass occupies residues 412–432; sequence GSFFCARIGFNLMAIYLVELF. The Cytoplasmic segment spans residues 433 to 441; the sequence is PTCVRNSAT. A helical membrane pass occupies residues 442–462; that stretch reads MMLRQALVVGGACCPLIASLG. The Extracellular portion of the chain corresponds to 463 to 467; that stretch reads RNVPS. Residues 468-488 traverse the membrane as a helical segment; sequence LSFAVFGFAMSGLGLFALLLP. At 489 to 515 the chain is on the cytoplasmic side; sequence ETKGLSLCDTMEEQEQRDQALKTSHSC.

Belongs to the major facilitator (TC 2.A.1) superfamily. Organic cation transporter (TC 2.A.1.19) family. In terms of tissue distribution, mostly expressed in leaves and siliques, and, to a lower extent, in roots, stems and flowers.

The protein localises to the vacuole membrane. Its function is as follows. High affinity carnitine transporter involved in the active cellular uptake of carnitine. Also transports organic cations. This Arabidopsis thaliana (Mouse-ear cress) protein is Organic cation/carnitine transporter 5 (OCT5).